Reading from the N-terminus, the 42-residue chain is Photosystem I reaction center subunit IX (42 aa).

A helical transmembrane segment spans residues tyrosine 7 to isoleucine 27.

Belongs to the PsaJ family.

The protein localises to the plastid. Its subcellular location is the chloroplast thylakoid membrane. Functionally, may help in the organization of the PsaE and PsaF subunits. The chain is Photosystem I reaction center subunit IX from Chloranthus spicatus (Chulantree).